Here is a 96-residue protein sequence, read N- to C-terminus: Co-chaperonin GroES (96 aa).

The protein belongs to the GroES chaperonin family. Heptamer of 7 subunits arranged in a ring. Interacts with the chaperonin GroEL.

The protein localises to the cytoplasm. In terms of biological role, together with the chaperonin GroEL, plays an essential role in assisting protein folding. The GroEL-GroES system forms a nano-cage that allows encapsulation of the non-native substrate proteins and provides a physical environment optimized to promote and accelerate protein folding. GroES binds to the apical surface of the GroEL ring, thereby capping the opening of the GroEL channel. This chain is Co-chaperonin GroES, found in Haemophilus influenzae (strain PittEE).